We begin with the raw amino-acid sequence, 321 residues long: Necdin (321 aa).

Positions Met1 to Ala96 are disordered. Positions Ser20 to Ser35 are enriched in low complexity. In terms of domain architecture, MAGE spans Leu98–Ala297.

As to quaternary structure, binds to the transactivation domains of E2F1 and p53. Binds also SV40 large T antigen and adenovirus E1A. Interacts with nucleobindin 1 and 2. Almost ubiquitous. Detected in fetal brain, lung, liver and kidney; in adult heart, brain, placenta, lung, liver, skeletal muscle, kidney, pancreas, spleen, thymus, prostate, testis, ovary, small intestine and colon. Not detected in peripheral blood leukocytes. In brain, restricted to post-mitotic neurons.

It is found in the perikaryon. The protein resides in the nucleus. In terms of biological role, growth suppressor that facilitates the entry of the cell into cell cycle arrest. Functionally similar to the retinoblastoma protein it binds to and represses the activity of cell-cycle-promoting proteins such as SV40 large T antigen, adenovirus E1A, and the transcription factor E2F. Necdin also interacts with p53 and works in an additive manner to inhibit cell growth. Also functions as a transcription factor and directly binds to specific guanosine-rich DNA sequences. This Homo sapiens (Human) protein is Necdin (NDN).